Reading from the N-terminus, the 380-residue chain is Genome polyprotein (380 aa).

Disordered stretches follow at residues 54–154 (GTVD…TGKI) and 349–380 (GNVG…QQHH). A compositionally biased stretch (low complexity) spans 67-84 (QGTTPPATGSGAKPATSG). 2 stretches are compositionally biased toward gly residues: residues 85–99 (AGSG…GVTG) and 106–123 (SGTG…GSGS). Residues 129 to 140 (NTGSAGTNATGG) show a composition bias toward low complexity.

It belongs to the potyviridae genome polyprotein family. In terms of processing, genome polyprotein of potyviruses undergoes post-translational proteolytic processing by the main proteinase NIa-pro resulting in the production of at least ten individual proteins. The P1 proteinase and the HC-pro cleave only their respective C-termini autocatalytically. 6K1 is essential for proper proteolytic separation of P3 from CI.

The protein resides in the virion. The enzyme catalyses RNA(n) + a ribonucleoside 5'-triphosphate = RNA(n+1) + diphosphate. An RNA-dependent RNA polymerase that plays an essential role in the virus replication. Functionally, involved in aphid transmission, cell-to-cell and systemis movement, encapsidation of the viral RNA and in the regulation of viral RNA amplification. In Sorghum halepense (Johnson grass), this protein is Genome polyprotein.